The primary structure comprises 799 residues: DISARM protein DrmE (799 aa).

The protein resides in the cytoplasm. In terms of biological role, component of antiviral defense system DISARM (defense island system associated with restriction-modification), composed of DrmE, DrmA, DrmB, DrmC and DrmMII. DISARM is probably a multi-gene restriction module, this subunit has an unknown function. Expression of DISARM in B.subtilis (strain BEST7003) confers resistance to phages Nf, phi29, phi105, phi3T, SPO1, SPR and SPP1. Protection is over 10(7)-fold against phi3T, 10(4)-10(5)-fold against Nf, phi29, phi105 and SPR, 100-fold against SPO1 and 10-fold against SPP1. DISARM does not interfere with phage adsorption, but instead interferes with (phi3T) DNA replication early in its cycle, preventing replication, circularization and lysogeny and probably causes phage DNA degradation (DNA is degraded in SPP1-infected cells). This chain is DISARM protein DrmE, found in Bacillus paralicheniformis (strain ATCC 9945a / NCIMB 11709 / CD-2).